We begin with the raw amino-acid sequence, 561 residues long: Zinc finger protein 394 (561 aa).

Residues 1–61 are disordered; it reads MNSSLTAQRR…NYPAASPDPE (61 aa). Ser12 is subject to Phosphoserine. Lys40 participates in a covalent cross-link: Glycyl lysine isopeptide (Lys-Gly) (interchain with G-Cter in SUMO2). Positions 64–146 constitute an SCAN box domain; sequence RLHFRQLRYQ…AVVRALQRAL (83 aa). In terms of domain architecture, KRAB spans 155 to 230; the sequence is VTFEDTAVSL…LQEAFQGKRP (76 aa). The tract at residues 182-201 is disordered; it reads ESAQKDSGSTVPPSLESRVE. Glycyl lysine isopeptide (Lys-Gly) (interchain with G-Cter in SUMO2) cross-links involve residues Lys203 and Lys228. A disordered region spans residues 231–285; that stretch reads LFSKCGSTHEDRVEKQSGDPLPLKLENSPEAEGLNSISDVNKNGSIEGEDSKNNE. Residues 237–247 show a composition bias toward basic and acidic residues; that stretch reads STHEDRVEKQS. Lys254 participates in a covalent cross-link: Glycyl lysine isopeptide (Lys-Gly) (interchain with G-Cter in SUMO2). Polar residues predominate over residues 265–274; that stretch reads NSISDVNKNG. Lys282 is covalently cross-linked (Glycyl lysine isopeptide (Lys-Gly) (interchain with G-Cter in SUMO2)). 7 consecutive C2H2-type zinc fingers follow at residues 358–380, 386–408, 414–436, 442–463, 469–491, 497–519, and 525–547; these read YKCGNCGKSFKQRSDLFRHQRIH, YGCQECGKSFSQSAALTKHQRTH, YTCLKCGERFRQNSHLNRHQSTH, FKCEECGETCHISNLFRHQRLH, YKCEECEKSFKQRSDLFKHHRIH, YGCSVCGKRFNQSATLIKHQRIH, and YKCLECGERFRQSTHLIRHQRIH. A Glycyl lysine isopeptide (Lys-Gly) (interchain with G-Cter in SUMO2) cross-link involves residue Lys443.

It belongs to the krueppel C2H2-type zinc-finger protein family.

It localises to the nucleus. In terms of biological role, may be involved in transcriptional regulation. In Homo sapiens (Human), this protein is Zinc finger protein 394 (ZNF394).